The sequence spans 465 residues: MSLLNVREYSNISMIKGPLIAVQGVSDAAYNELVEIEMPDGSKRRGLVVDSQMGVTFVQVFEGTTGISPTGSKVRFLGRGLEVKISEEMLGRIFNPLGEPLDNGPPVIGGEKRNINGDPINPATREYPEEFIQTGISAIDGLNSLLRGQKLPIFSGSGLPANTLAAQIAKQATVRGEESNFAVVFAAIGVRYDEALFFRKFFEETGAINRVAMFVTLANDPPSLKILTPKTALTLAEYLAFEKDMHVLAILIDMTNYCEALRELSASREEVPGRGGYPGYMYTDLATIYERAGKVIGKKGSITQMPILTMPNDDMTHPIPDLTGYITEGQIVLDRSLFNKGIYPPINVLMSLSRLMKDGIGEGKTRDDHKDLSNQLFAAYARAQDIRGLAAIIGEDSLSEVDRKYLLFAEAFERRFVAQGVNENRSIETTLDIGWEVLSILPESELSLIRSEYIKKYHPNYRGKK.

Belongs to the ATPase alpha/beta chains family. As to quaternary structure, has multiple subunits with at least A(3), B(3), C, D, E, F, H, I and proteolipid K(x).

The protein localises to the cell membrane. Functionally, component of the A-type ATP synthase that produces ATP from ADP in the presence of a proton gradient across the membrane. The B chain is a regulatory subunit. The protein is A-type ATP synthase subunit B of Sulfurisphaera tokodaii (strain DSM 16993 / JCM 10545 / NBRC 100140 / 7) (Sulfolobus tokodaii).